A 255-amino-acid chain; its full sequence is Kallikrein-15 (255 aa).

The first 15 residues, methionine 1–alanine 15, serve as a signal peptide directing secretion. Residues glutamine 16–lysine 20 constitute a propeptide, activation peptide. Residues leucine 21–lysine 253 are serine protease. An intrachain disulfide couples cysteine 46 to cysteine 62. Catalysis depends on charge relay system residues histidine 61 and aspartate 105. Disulfide bonds link cysteine 137–cysteine 214, cysteine 179–cysteine 193, and cysteine 204–cysteine 229. N-linked (GlcNAc...) asparagine glycosylation is present at asparagine 170. Serine 208 acts as the Charge relay system in catalysis. Residue asparagine 231 is glycosylated (N-linked (GlcNAc...) asparagine).

The protein belongs to the peptidase S1 family. Kallikrein subfamily.

Its subcellular location is the secreted. In terms of biological role, protease whose physiological substrate is not yet known. The chain is Kallikrein-15 (KLK15) from Saguinus oedipus (Cotton-top tamarin).